Here is a 257-residue protein sequence, read N- to C-terminus: Probable dihydroorotate dehydrogenase B (NAD(+)), electron transfer subunit (257 aa).

An FAD-binding FR-type domain is found at 2–89 (EKPVICRIKE…RGPYGTYFEP (88 aa)). [2Fe-2S] cluster contacts are provided by Cys-208, Cys-213, Cys-216, and Cys-226.

Belongs to the PyrK family. Heterotetramer of 2 PyrK and 2 PyrD type B subunits. [2Fe-2S] cluster serves as cofactor. Requires FAD as cofactor.

It functions in the pathway pyrimidine metabolism; UMP biosynthesis via de novo pathway; orotate from (S)-dihydroorotate (NAD(+) route): step 1/1. Its function is as follows. Responsible for channeling the electrons from the oxidation of dihydroorotate from the FMN redox center in the PyrD type B subunit to the ultimate electron acceptor NAD(+). The polypeptide is Probable dihydroorotate dehydrogenase B (NAD(+)), electron transfer subunit (Methanocaldococcus jannaschii (strain ATCC 43067 / DSM 2661 / JAL-1 / JCM 10045 / NBRC 100440) (Methanococcus jannaschii)).